Reading from the N-terminus, the 208-residue chain is GTP cyclohydrolase 1 (208 aa).

Zn(2+) contacts are provided by C89, H92, and C163.

It belongs to the GTP cyclohydrolase I family. Homomer.

It catalyses the reaction GTP + H2O = 7,8-dihydroneopterin 3'-triphosphate + formate + H(+). The protein operates within cofactor biosynthesis; 7,8-dihydroneopterin triphosphate biosynthesis; 7,8-dihydroneopterin triphosphate from GTP: step 1/1. This chain is GTP cyclohydrolase 1, found in Saccharolobus islandicus (strain L.S.2.15 / Lassen #1) (Sulfolobus islandicus).